The following is a 357-amino-acid chain: O-methyltransferase 1, chloroplastic (357 aa).

Residues 1-53 (MPVLPWLAAAATTPVRRSPPLPATPRALLRLPASSFPPWSNCAKSGLPPRGPF) constitute a chloroplast transit peptide. The interval 50–71 (RGPFATAADTPLGGSLPEPEEE) is disordered.

It belongs to the methyltransferase superfamily. LCMT family. As to expression, expressed in roots, leaf sheaths, flag leaves and panicles.

It localises to the plastid. Its subcellular location is the chloroplast. The enzyme catalyses N-acetylserotonin + S-adenosyl-L-methionine = melatonin + S-adenosyl-L-homocysteine + H(+). The protein operates within aromatic compound metabolism; melatonin biosynthesis; melatonin from serotonin: step 1/2. Its function is as follows. Involved in melatonin biosynthesis. Can function as acetylserotonin O-methyltransferase. Catalyzes the transfer of a methyl group onto N-acetylserotonin, producing melatonin (N-acetyl-5-methoxytryptamine). Involved in the regulation of jasmonate- and brassinosteroid-mediated plant growth and defense responses. The chain is O-methyltransferase 1, chloroplastic from Oryza sativa subsp. japonica (Rice).